The primary structure comprises 327 residues: Annexin A8 (327 aa).

Annexin repeat units follow at residues 21–92 (FNPV…ALMY), 93–164 (PPYR…CLLQ), 177–249 (GLAL…TIVK), and 253–324 (NLHC…SLVG). Ca(2+) is bound by residues methionine 266, glycine 268, glycine 270, and aspartate 310.

It belongs to the annexin family.

Functionally, this protein is an anticoagulant protein that acts as an indirect inhibitor of the thromboplastin-specific complex, which is involved in the blood coagulation cascade. This Oryctolagus cuniculus (Rabbit) protein is Annexin A8 (ANXA8).